The following is a 417-amino-acid chain: Xylulose 5-phosphate/phosphate translocator, chloroplastic (417 aa).

The N-terminal 82 residues, 1-82 (MISLNLSPSL…GFSRKPRSIA (82 aa)), are a transit peptide targeting the chloroplast. The segment at 66–102 (TNPESSSGFSRKPRSIAAVGSSDSNPDEKSDLGEAEK) is disordered. N-acetylalanine is present on alanine 83. The segment covering 91–102 (PDEKSDLGEAEK) has biased composition (basic and acidic residues). 9 helical membrane-spanning segments follow: residues 109–129 (TLQL…FNIF), 141–161 (WLLA…LWSF), 173–193 (FIIA…SACV), 198–218 (VAVS…VIFS), 225–245 (YPLA…LAAV), 247–267 (EVSF…GFVL), 287–307 (LYGC…IFVE), 318–338 (AIAS…SGVF), and 384–404 (LNAL…QATA). In terms of domain architecture, EamA spans 127 to 243 (NIFNKKALNV…LPIVMGCSLA (117 aa)).

This sequence belongs to the TPT transporter family. TPT (TC 2.A.7.9) subfamily. In terms of tissue distribution, widely expressed.

It is found in the plastid. It localises to the chloroplast membrane. In terms of biological role, sugar phosphate/phosphate translocator that transports inorganic phosphate, triose phosphate, 3-phosphoglycerate, xylulose 5-phosphate (Xul-5-P) and to a lesser extent ribulose 5-phosphate. Does not transport ribose 5-phosphate or hexose phosphates. Provides cytosolic Xul-5-P to the chloroplast, where it is used as an intermediate in the plastidic pentose phosphate pathways. In Arabidopsis thaliana (Mouse-ear cress), this protein is Xylulose 5-phosphate/phosphate translocator, chloroplastic (XPT).